The sequence spans 357 residues: uncharacterized protein (357 aa).

The region spanning 27–242 is the Radical SAM core domain; that stretch reads HFGNTVTFER…VSSVRLNFPK (216 aa). [4Fe-4S] cluster contacts are provided by Cys-44, Cys-50, and Cys-53.

The cofactor is [4Fe-4S] cluster.

This is an uncharacterized protein from Methanocaldococcus jannaschii (strain ATCC 43067 / DSM 2661 / JAL-1 / JCM 10045 / NBRC 100440) (Methanococcus jannaschii).